The following is a 330-amino-acid chain: Phosphate acyltransferase (330 aa).

It belongs to the PlsX family. Homodimer. Probably interacts with PlsY.

Its subcellular location is the cytoplasm. It carries out the reaction a fatty acyl-[ACP] + phosphate = an acyl phosphate + holo-[ACP]. It functions in the pathway lipid metabolism; phospholipid metabolism. Functionally, catalyzes the reversible formation of acyl-phosphate (acyl-PO(4)) from acyl-[acyl-carrier-protein] (acyl-ACP). This enzyme utilizes acyl-ACP as fatty acyl donor, but not acyl-CoA. The chain is Phosphate acyltransferase from Streptococcus pneumoniae (strain JJA).